We begin with the raw amino-acid sequence, 232 residues long: Orotidine 5'-phosphate decarboxylase (232 aa).

Residues Asp14, Lys36, 63–72, Thr122, Arg183, Gln192, Gly212, and Arg213 contribute to the substrate site; that span reads DLKFHDIPNT. Lys65 functions as the Proton donor in the catalytic mechanism.

This sequence belongs to the OMP decarboxylase family. Type 1 subfamily. Homodimer.

The catalysed reaction is orotidine 5'-phosphate + H(+) = UMP + CO2. It participates in pyrimidine metabolism; UMP biosynthesis via de novo pathway; UMP from orotate: step 2/2. Catalyzes the decarboxylation of orotidine 5'-monophosphate (OMP) to uridine 5'-monophosphate (UMP). The chain is Orotidine 5'-phosphate decarboxylase from Psychrobacter arcticus (strain DSM 17307 / VKM B-2377 / 273-4).